A 156-amino-acid polypeptide reads, in one-letter code: ATP synthase subunit b (156 aa).

Residues methionine 1–valine 21 traverse the membrane as a helical segment.

It belongs to the ATPase B chain family. As to quaternary structure, F-type ATPases have 2 components, F(1) - the catalytic core - and F(0) - the membrane proton channel. F(1) has five subunits: alpha(3), beta(3), gamma(1), delta(1), epsilon(1). F(0) has three main subunits: a(1), b(2) and c(10-14). The alpha and beta chains form an alternating ring which encloses part of the gamma chain. F(1) is attached to F(0) by a central stalk formed by the gamma and epsilon chains, while a peripheral stalk is formed by the delta and b chains.

The protein localises to the cell inner membrane. Functionally, f(1)F(0) ATP synthase produces ATP from ADP in the presence of a proton or sodium gradient. F-type ATPases consist of two structural domains, F(1) containing the extramembraneous catalytic core and F(0) containing the membrane proton channel, linked together by a central stalk and a peripheral stalk. During catalysis, ATP synthesis in the catalytic domain of F(1) is coupled via a rotary mechanism of the central stalk subunits to proton translocation. In terms of biological role, component of the F(0) channel, it forms part of the peripheral stalk, linking F(1) to F(0). The polypeptide is ATP synthase subunit b (Hydrogenovibrio crunogenus (strain DSM 25203 / XCL-2) (Thiomicrospira crunogena)).